A 1207-amino-acid polypeptide reads, in one-letter code: Putative coatomer subunit alpha (1207 aa).

8 WD repeats span residues 9-50 (SRSS…DRFD), 51-90 (GHDG…LLFS), 93-134 (GHMD…AILT), 135-174 (GHSH…MKNA), 210-249 (GHDR…AWEV), 254-293 (GHFN…AVQT), 296-336 (RDND…HALN), and 370-411 (SAWL…NSLP). Phosphoserine occurs at positions 409 and 942.

As to quaternary structure, oligomeric complex that consists of at least the alpha, beta, beta', gamma, delta, epsilon and zeta subunits.

The protein resides in the cytoplasm. The protein localises to the golgi apparatus membrane. Functionally, the coatomer is a cytosolic protein complex that binds to dilysine motifs and reversibly associates with Golgi non-clathrin-coated vesicles, which further mediate biosynthetic protein transport from the ER, via the Golgi up to the trans Golgi network. Coatomer complex is required for budding from Golgi membranes, and is essential for the retrograde Golgi-to-ER transport of dilysine-tagged proteins. The polypeptide is Putative coatomer subunit alpha (Schizosaccharomyces pombe (strain 972 / ATCC 24843) (Fission yeast)).